The chain runs to 333 residues: Biotin synthase (333 aa).

Residues 51 to 278 enclose the Radical SAM core domain; sequence RAIQLSTLMS…KSYVRLSAGR (228 aa). [4Fe-4S] cluster contacts are provided by Cys66, Cys70, and Cys73. Positions 110, 141, 201, and 273 each coordinate [2Fe-2S] cluster.

It belongs to the radical SAM superfamily. Biotin synthase family. Homodimer. [4Fe-4S] cluster is required as a cofactor. Requires [2Fe-2S] cluster as cofactor.

The catalysed reaction is (4R,5S)-dethiobiotin + (sulfur carrier)-SH + 2 reduced [2Fe-2S]-[ferredoxin] + 2 S-adenosyl-L-methionine = (sulfur carrier)-H + biotin + 2 5'-deoxyadenosine + 2 L-methionine + 2 oxidized [2Fe-2S]-[ferredoxin]. It functions in the pathway cofactor biosynthesis; biotin biosynthesis; biotin from 7,8-diaminononanoate: step 2/2. Functionally, catalyzes the conversion of dethiobiotin (DTB) to biotin by the insertion of a sulfur atom into dethiobiotin via a radical-based mechanism. The sequence is that of Biotin synthase from Haemophilus influenzae (strain 86-028NP).